The primary structure comprises 1032 residues: ATPase MORC2 (1032 aa).

An N-acetylalanine modification is found at alanine 2. ATP-binding positions include asparagine 39, 87-89 (SAK), and 99-105 (QYGNGLK). Asparagine 39 serves as a coordination point for Mg(2+). A coiled-coil region spans residues 282-362 (SRFKTRAEQE…KEAKQRALKE (81 aa)). Residue lysine 427 participates in ATP binding. Residues 490 to 544 (AMEIPTTIQCDLCLKWRTLPFQLSSVEKDYPDTWVCSMNPDPEQDRCEASEQKQK) form a CW-type zinc finger. Zn(2+)-binding residues include cysteine 499, cysteine 502, cysteine 525, and cysteine 536. Disordered stretches follow at residues 530-563 (DPEQ…KQKQ) and 577-793 (ALQK…RAQK). 2 stretches are compositionally biased toward basic and acidic residues: residues 532–543 (EQDRCEASEQKQ) and 550–563 (FRKD…KQKQ). Residues 547–584 (LGTFRKDMKTQEEKQKQLTEKIRQQQEKLEALQKTTPI) are a coiled coil. Residue threonine 582 is modified to Phosphothreonine. Residues serine 602 and serine 615 each carry the phosphoserine modification. A compositionally biased stretch (pro residues) spans 627–638 (SRPPSLPTPRPA). A Glycyl lysine isopeptide (Lys-Gly) (interchain with G-Cter in SUMO2) cross-link involves residue lysine 652. A compositionally biased stretch (low complexity) spans 690–704 (PLVQQLSPSLLPNSK). Phosphoserine is present on serine 696. Residue lysine 704 forms a Glycyl lysine isopeptide (Lys-Gly) (interchain with G-Cter in SUMO2) linkage. Phosphoserine is present on serine 705. Residues 711-720 (SPKVIKTPVV) are compositionally biased toward low complexity. Lysine 716 is covalently cross-linked (Glycyl lysine isopeptide (Lys-Gly) (interchain with G-Cter in SUMO2)). Serine 725 and serine 730 each carry phosphoserine. Residue threonine 733 is modified to Phosphothreonine. Serine 739 is modified (phosphoserine; by PAK1). The stretch at 741-761 (AVSDEEEVEEEAERRKERCKR) forms a coiled coil. Serine 743 is subject to Phosphoserine. Basic and acidic residues predominate over residues 765–774 (VVKEEKKDSN). Lysine 767 participates in a covalent cross-link: Glycyl lysine isopeptide (Lys-Gly) (interchain with G-Cter in SUMO2). Serine 777 and serine 779 each carry phosphoserine. Residue lysine 819 forms a Glycyl lysine isopeptide (Lys-Gly) (interchain with G-Cter in SUMO2) linkage. A disordered region spans residues 850-870 (RLMKPPSPEHQSLDTQQEGGE). Lysine 932 participates in a covalent cross-link: Glycyl lysine isopeptide (Lys-Gly) (interchain with G-Cter in SUMO2). Residues 966–1016 (QSRADSRAKASEESLRTSERKLRETEEKLQKLRTNIVALLQKVQEDIDINT) adopt a coiled-coil conformation.

Homodimerizes upon ATP-binding and dissociate upon ATP hydrolysis; homodimerization is required for gene silencing. Interacts with HDAC4. Interacts with ACLY. Interacts with TASOR and MPHOSPH8; the interactions associate MORC2 with the HUSH complex which recruits MORC2 to heterochromatic loci. Phosphorylated by PAK1 at Ser-739 upon DNA damage. Phosphorylation is required for ATPase activity and recruitment to damaged chromatin. Highly expressed in smooth muscle, pancreas and testis.

It localises to the nucleus. It is found in the cytoplasm. The protein localises to the cytosol. Its subcellular location is the chromosome. The protein resides in the nucleus matrix. It carries out the reaction ATP + H2O = ADP + phosphate + H(+). Its activity is regulated as follows. ATPase activity is dependent of phosphorylation by PAK1 and presence of DNA. Essential for epigenetic silencing by the HUSH (human silencing hub) complex. Recruited by HUSH to target site in heterochromatin, the ATPase activity and homodimerization are critical for HUSH-mediated silencing. Represses germ cell-related genes and L1 retrotransposons in collaboration with SETDB1 and the HUSH complex, the silencing is dependent of repressive epigenetic modifications, such as H3K9me3 mark. Silencing events often occur within introns of transcriptionally active genes, and lead to the down-regulation of host gene expression. During DNA damage response, regulates chromatin remodeling through ATP hydrolysis. Upon DNA damage, is phosphorylated by PAK1, both colocalize to chromatin and induce H2AX expression. ATPase activity is required and dependent of phosphorylation by PAK1 and presence of DNA. Recruits histone deacetylases, such as HDAC4, to promoter regions, causing local histone H3 deacetylation and transcriptional repression of genes such as CA9. Exhibits a cytosolic function in lipogenesis, adipogenic differentiation, and lipid homeostasis by increasing the activity of ACLY, possibly preventing its dephosphorylation. This Homo sapiens (Human) protein is ATPase MORC2.